Reading from the N-terminus, the 583-residue chain is Radixin (583 aa).

The FERM domain occupies 5-295; it reads INVRVTTMDA…GNHELYMRRR (291 aa). 60–63 lines the a 1,2-diacyl-sn-glycero-3-phospho-(1D-myo-inositol) pocket; it reads KLNK. An N6-succinyllysine modification is found at lysine 83. Position 278 (lysine 278) interacts with a 1,2-diacyl-sn-glycero-3-phospho-(1D-myo-inositol). Disordered stretches follow at residues 310–330, 376–407, and 462–526; these read REEK…KKKR, DQER…AKQA, and ELKT…RVKK. Residues 376 to 400 show a composition bias toward basic and acidic residues; sequence DQERKRAKEEAERLEKERRAAEEAK. Pro residues predominate over residues 469 to 480; it reads APPPPPPPPVIP. Basic and acidic residues-rich tracts occupy residues 483–492 and 506–525; these read ENEHDEHDEN and MNHR…ERVK. A Phosphothreonine; by ROCK2 modification is found at threonine 564.

In terms of assembly, binds NHERF1. Interacts with NHERF1, NHERF2, LAYN, MME/NEP and ICAM2. Interacts with CPNE1 (via VWFA domain) and CPNE4 (via VWFA domain). Interacts (via FERM domain) with SPN/CD43 cytoplasmic tail. Interacts with CD44. Interacts with CLIC5; may work together in a complex which also includes EZR and MYO6 to stabilize linkages between the plasma membrane and subjacent actin cytoskeleton at the base of stereocilia. Post-translationally, phosphorylated by tyrosine-protein kinases. Phosphorylation by ROCK2 suppresses the head-to-tail association of the N-terminal and C-terminal halves resulting in an opened conformation which is capable of actin and membrane-binding.

It localises to the cell membrane. Its subcellular location is the cytoplasm. It is found in the cytoskeleton. The protein resides in the cleavage furrow. The protein localises to the cell projection. It localises to the microvillus. Its subcellular location is the stereocilium. With respect to regulation, a head-to-tail association, of the N-terminal and C-terminal halves results in a closed conformation (inactive form) which is incapable of actin or membrane-binding. In terms of biological role, probably plays a crucial role in the binding of the barbed end of actin filaments to the plasma membrane. The sequence is that of Radixin (RDX) from Homo sapiens (Human).